The following is a 378-amino-acid chain: E3 ubiquitin-protein ligase ATL9 (378 aa).

The signal sequence occupies residues 1–33 (MAILDTKSSRWIPHNLLFLLLLLLLQSVPYGFG). A helical membrane pass occupies residues 51-71 (VVVVITVLFLVIFFMVFGSIF). The RING-type; atypical zinc-finger motif lies at 135 to 177 (CAVCLCEFEDDETLRLMPPCCHVFHADCVDVWLSEHSTCPLCR). 3 disordered regions span residues 187–211 (DDDDSTESYSGTDPGTISSSTDPER), 300–326 (ARSSRSGYRSGSVGSERSAFPYGRKSN), and 350–378 (FSGDAPKNLPTSIEAGERSFERLRPDERV). Residues 193 to 207 (ESYSGTDPGTISSST) show a composition bias toward polar residues. Residues 301–317 (RSSRSGYRSGSVGSERS) show a composition bias toward low complexity. Positions 364-378 (AGERSFERLRPDERV) are enriched in basic and acidic residues.

The protein belongs to the RING-type zinc finger family. ATL subfamily.

Its subcellular location is the membrane. The catalysed reaction is S-ubiquitinyl-[E2 ubiquitin-conjugating enzyme]-L-cysteine + [acceptor protein]-L-lysine = [E2 ubiquitin-conjugating enzyme]-L-cysteine + N(6)-ubiquitinyl-[acceptor protein]-L-lysine.. Its pathway is protein modification; protein ubiquitination. Functionally, E3 ubiquitin-protein ligase able to catalyze polyubiquitination with ubiquitin-conjugating enzyme E2 UBC8 in vitro. May be involved in the early steps of the plant defense signaling pathway. The protein is E3 ubiquitin-protein ligase ATL9 (ATL9) of Arabidopsis thaliana (Mouse-ear cress).